Consider the following 362-residue polypeptide: Spermidine/putrescine import ATP-binding protein PotA (362 aa).

The ABC transporter domain occupies 4-235; that stretch reads IKLDHITKQY…PVNDFVARFI (232 aa). 37-44 contacts ATP; it reads GPSGSGKT.

The protein belongs to the ABC transporter superfamily. Spermidine/putrescine importer (TC 3.A.1.11.1) family. The complex is composed of two ATP-binding proteins (PotA), two transmembrane proteins (PotB and PotC) and a solute-binding protein (PotD).

It localises to the cell membrane. It carries out the reaction ATP + H2O + polyamine-[polyamine-binding protein]Side 1 = ADP + phosphate + polyamineSide 2 + [polyamine-binding protein]Side 1.. In terms of biological role, part of the ABC transporter complex PotABCD involved in spermidine/putrescine import. Responsible for energy coupling to the transport system. This is Spermidine/putrescine import ATP-binding protein PotA from Lactobacillus delbrueckii subsp. bulgaricus (strain ATCC BAA-365 / Lb-18).